The following is a 229-amino-acid chain: 7-cyano-7-deazaguanine synthase (229 aa).

8–18 (FSGGQDSTTCL) serves as a coordination point for ATP. 4 residues coordinate Zn(2+): Cys186, Cys195, Cys198, and Cys201.

It belongs to the QueC family. Requires Zn(2+) as cofactor.

It carries out the reaction 7-carboxy-7-deazaguanine + NH4(+) + ATP = 7-cyano-7-deazaguanine + ADP + phosphate + H2O + H(+). It participates in purine metabolism; 7-cyano-7-deazaguanine biosynthesis. Its function is as follows. Catalyzes the ATP-dependent conversion of 7-carboxy-7-deazaguanine (CDG) to 7-cyano-7-deazaguanine (preQ(0)). The protein is 7-cyano-7-deazaguanine synthase of Edwardsiella ictaluri (strain 93-146).